Consider the following 385-residue polypeptide: Pre-mRNA-splicing factor slt-11 (385 aa).

A disordered region spans residues 157-233 (RKGREVDEEG…PPGPKDWLPP (77 aa)). Over residues 171 to 187 (GSSSGAGRATGGNPAVG) the composition is skewed to low complexity. An RRM domain is found at 239–312 (MSLFVTGIED…CPLRVRWSVP (74 aa)). Basic and acidic residues predominate over residues 320–331 (KEQRSEMLRDGR). The disordered stretch occupies residues 320–370 (KEQRSEMLRDGRSAFGSGQKTGGQKAIGGQNAQGGASGAQKDDASNLTIAA).

The protein belongs to the SLT11 family. Associated with the spliceosome.

It localises to the nucleus. Its function is as follows. Involved in pre-mRNA splicing. Facilitates the cooperative formation of U2/U6 helix II in association with stem II in the spliceosome. Binds to RNA. The protein is Pre-mRNA-splicing factor slt-11 (slt-11) of Neurospora crassa (strain ATCC 24698 / 74-OR23-1A / CBS 708.71 / DSM 1257 / FGSC 987).